The sequence spans 451 residues: UDP-N-acetylmuramate--L-alanine ligase (451 aa).

110-116 (GTHGKTT) is a binding site for ATP.

Belongs to the MurCDEF family.

The protein localises to the cytoplasm. The catalysed reaction is UDP-N-acetyl-alpha-D-muramate + L-alanine + ATP = UDP-N-acetyl-alpha-D-muramoyl-L-alanine + ADP + phosphate + H(+). The protein operates within cell wall biogenesis; peptidoglycan biosynthesis. Functionally, cell wall formation. This Francisella tularensis subsp. tularensis (strain WY96-3418) protein is UDP-N-acetylmuramate--L-alanine ligase.